Reading from the N-terminus, the 344-residue chain is Phosphoribosylformylglycinamidine cyclo-ligase (344 aa).

This sequence belongs to the AIR synthase family.

It is found in the cytoplasm. It catalyses the reaction 2-formamido-N(1)-(5-O-phospho-beta-D-ribosyl)acetamidine + ATP = 5-amino-1-(5-phospho-beta-D-ribosyl)imidazole + ADP + phosphate + H(+). It participates in purine metabolism; IMP biosynthesis via de novo pathway; 5-amino-1-(5-phospho-D-ribosyl)imidazole from N(2)-formyl-N(1)-(5-phospho-D-ribosyl)glycinamide: step 2/2. The sequence is that of Phosphoribosylformylglycinamidine cyclo-ligase from Neisseria gonorrhoeae (strain ATCC 700825 / FA 1090).